An 867-amino-acid polypeptide reads, in one-letter code: Armadillo repeat-containing protein 2 (867 aa).

2 disordered regions span residues 1-115 (MLSP…CFSF) and 214-252 (TSLP…AVPK). 3 stretches are compositionally biased toward polar residues: residues 18–28 (PSVSKQKTSAE), 40–50 (VRTQRPFTPQE), and 60–69 (SSRTSENRPP). Low complexity-rich tracts occupy residues 70-81 (SSFSLHASSFES) and 234-243 (SSCPSSSDLS). ARM repeat units follow at residues 262–301 (IEVD…HALE), 304–344 (NMLG…ALKV), 363–403 (EKND…SIKF), 408–449 (LGFL…HLLV), 462–503 (SLVR…KLTS), 506–547 (DCCT…NLTA), 551–589 (QARE…QRGE), 591–616 (HRAQ…NIAI), 619–662 (GVGP…NLSY), 664–705 (QVKN…NLSQ), 707–746 (HDVC…NLTV), and 748–790 (KDKR…NFSE).

As to expression, expressed at higher level in testis.

Functionally, required for sperm flagellum axoneme organization and function. Involved in axonemal central pair complex assembly and/or stability. This chain is Armadillo repeat-containing protein 2, found in Homo sapiens (Human).